Consider the following 678-residue polypeptide: NADPH--cytochrome P450 reductase (678 aa).

Glycine 2 is modified (N-acetylglycine). Residues 2–21 are Lumenal-facing; that stretch reads GDSHVDTGATSTEAVAEEVS. Residues 22 to 42 traverse the membrane as a helical segment; sequence LFSMTDMILLSVLVGFLTYFF. At 43–678 the chain is on the cytoplasmic side; the sequence is LFRKKKEEIP…KGRYSLDVWS (636 aa). Serine 63 is subject to Phosphoserine. One can recognise a Flavodoxin-like domain in the interval 80–224; sequence IIVFYGSQTG…DFITWREQFW (145 aa). Residues 86-91, 138-141, 173-182, and aspartate 208 each bind FMN; these read SQTGTA, ATYG, and LGNKTYEHFN. The FAD-binding FR-type domain maps to 279 to 521; it reads KNPFLAAVTT…FVRKSQFRLP (243 aa). NADP(+) is bound at residue arginine 298. FAD contacts are provided by residues arginine 424, 454 to 457, 472 to 474, tyrosine 478, and 488 to 491; these read RYYS, CAV, and GVAT. Residues threonine 535, 596–597, 602–606, and aspartate 639 each bind NADP(+); these read SR and KVYVQ. Tryptophan 677 contacts FAD.

The protein belongs to the NADPH--cytochrome P450 reductase family. In the N-terminal section; belongs to the flavodoxin family. This sequence in the C-terminal section; belongs to the flavoprotein pyridine nucleotide cytochrome reductase family. It depends on FAD as a cofactor. FMN is required as a cofactor.

It is found in the endoplasmic reticulum membrane. The enzyme catalyses 2 oxidized [cytochrome P450] + NADPH = 2 reduced [cytochrome P450] + NADP(+) + H(+). Its function is as follows. This enzyme is required for electron transfer from NADP to cytochrome P450 in microsomes. It can also provide electron transfer to heme oxygenase and cytochrome B5. In Cavia porcellus (Guinea pig), this protein is NADPH--cytochrome P450 reductase.